The primary structure comprises 320 residues: Zinc transporter ZitB (320 aa).

6 consecutive transmembrane segments (helical) span residues 16 to 36 (LLAA…GGLL), 43 to 63 (LADA…LVAV), 85 to 105 (AAFV…WEAI), 117 to 137 (VPML…FWLL), 153 to 173 (LHVL…IIIL), and 180 to 200 (IDPI…WALL).

It belongs to the cation diffusion facilitator (CDF) transporter (TC 2.A.4) family. SLC30A subfamily.

It localises to the cell inner membrane. In terms of biological role, involved in zinc efflux across the cytoplasmic membrane, thus reducing zinc accumulation in the cytoplasm and rendering bacteria more resistant to zinc. It may contribute to zinc homeostasis at low concentrations of zinc. The chain is Zinc transporter ZitB from Pectobacterium atrosepticum (strain SCRI 1043 / ATCC BAA-672) (Erwinia carotovora subsp. atroseptica).